The sequence spans 395 residues: 1-deoxy-D-xylulose 5-phosphate reductoisomerase (395 aa).

NADPH-binding residues include threonine 10, glycine 11, serine 12, isoleucine 13, alanine 36, and asparagine 123. Lysine 124 is a 1-deoxy-D-xylulose 5-phosphate binding site. Residue glutamate 125 participates in NADPH binding. Aspartate 149 is a Mn(2+) binding site. 1-deoxy-D-xylulose 5-phosphate is bound by residues serine 150, glutamate 151, serine 185, and histidine 208. Glutamate 151 serves as a coordination point for Mn(2+). Glycine 214 serves as a coordination point for NADPH. Residues serine 221, asparagine 226, lysine 227, and glutamate 230 each coordinate 1-deoxy-D-xylulose 5-phosphate. Residue glutamate 230 participates in Mn(2+) binding.

The protein belongs to the DXR family. The cofactor is Mg(2+). Mn(2+) serves as cofactor.

The catalysed reaction is 2-C-methyl-D-erythritol 4-phosphate + NADP(+) = 1-deoxy-D-xylulose 5-phosphate + NADPH + H(+). It functions in the pathway isoprenoid biosynthesis; isopentenyl diphosphate biosynthesis via DXP pathway; isopentenyl diphosphate from 1-deoxy-D-xylulose 5-phosphate: step 1/6. In terms of biological role, catalyzes the NADPH-dependent rearrangement and reduction of 1-deoxy-D-xylulose-5-phosphate (DXP) to 2-C-methyl-D-erythritol 4-phosphate (MEP). This is 1-deoxy-D-xylulose 5-phosphate reductoisomerase from Shewanella amazonensis (strain ATCC BAA-1098 / SB2B).